Reading from the N-terminus, the 2603-residue chain is MAASPAKFFFGFLIVSIVLWMIFMLFAWMLSRVLGASVVFRVGGWKCLKDVVVKFKKGAIESVSASEIKLSLRQSLVKLGVGFLSRDPKVQVLISDLEVVMRSSTSTTNLQKAKSHKPRTSGRGKWMVVANVARFLSVSVADMVVKTTKVIVEVKELKLDINKDGGTKPNLYVKLNVLPILVHLCESRIISDQSSNVSFECCPASQASSASPDRSAATLFCDELSLSSEFGHDRAVGIVVRNVEVTSGDVILNFDEDSFPKSKQSSASLRSDEVRTSATAASSAKKPHKEHQLVAALAKYSSSFPEKVSFSLPKLDVRCVNREHDLLAENNITGIQLRSVKSKSFEDTGESTRLDVQMELSEIHVFREADSSILEIMKVDVVSFIYIPVQPVLPIRAEVDIKLGGTRCNLFISRLQPWLRLHFLKKKKLVLQEKTHNLEKTKAADMKAIMWTGTVSAPEMTVMLYGTEDIPLYHFCSQSSHVFANNVSSLGTAVHVELGELNLHLADEYQECFREHLFGIEPNSGSLMHIAKVSLDWGRRDRTSSDEVGFRSKLVLSVDVTGMGIYFSFKRVQSLIINALSFKALFKTLSVTGKKMNKTVSVQPSKGSGKGTRLVNINLERCCVNFCDDTGLDNTVIDDPKSVNYGSQGGRVSFSSLADGTPRTASILSTAPEACKRLKYSVSLEISQFSFCLNKDKLSTQMELGRAKSIYQEYLEEHTPCSNVILFDMHNAKLVRRSGGLNEIDVCSLFSATHISLGWEPDVHLSFYELFLRLRSLVYAQRHKEPESGCNKGISSVKDGGPSEKINQSNSVNKQKKKESMFAIDVETLTISAEVGDGVEVKLEAQSIFSENACIGVLLEGLMLAFNGSRVFKTTRMQVSRIPTATNLSDAVPVMTDGPWDWVVQGLDVHICMPYKLQLRAIDDSIEEMLRGLKLISVAKGKHILSGKRESSKPKKSSPKFGRIKFCIRRLTADIEEEPIQGWLDEHYQLVKKEACELAVRLKFLEDLIHKAGQSPKGAETSAVLDERKMFFDGVEIDVEDPVAINKVKEEIHKRSFQSYYQACQGLAPSEGSGACREGFQAGFKPSAARTSLLSVCATDFDLSLTAVHGGDAGLIEVLKKLDPICEENDIPFSRLYGSNVYLNTGSLVVQLRNYTLPLLSGTSGKCEGRIVLAQQATCFQPQISQDVFVGRWRKVKMFRSASGTTPPLKTYSDLRIHFEQGEVSFGVGYEPAFADISYAFTVALRRANLSHRNPDMVQVIKKERSLPWWDDMRNYVHGNITLSFSESKWSVLATTDPYESLDQLQIVSGPIELKQSDGRVFVSAKDFKIKLSSLESLISRHSLKVPVRASGAAFIEAPDFNLEVTMDWDCESGNSLNHYLYAFPAEGKPREKVFDPFRSTSLSLRWNFSLRPEKFHQSPSSTEHPTDVGTVYSSQDKPDSIPLASPTMNLGAHDLAWILKFWGLNYYPPHKLRSFSRWPRFGVPRAARSGNLSLDKVMTEFMLRVDATPSLIKYMPWDSDDPAKGLTFNMAKLKYELCYSRGKQKYTFECKRDALDLVYQGLDLHVPKAFINKDEHPCIPGSVQVLRKSTQDALIDRVPSGKDHKRYEKHRDEGFLLSSDYFTIRRQAPKADPERLLAWQEAGRRNLEMTYVRSEFENGSESDEHIRSDPSDDDGYNVVIADNCQRVFVYGLKLLWTIENRDAVWSFVGGISKAFEPPKPSPSRQYTQRKIHEENQKESCPETHQGEMSRSSASPGRNLPSSPSHSIKIEKSDDIGTVETIESEEEGTRHFMVNVIEPQFNLHSEEANGRFLLAAVSGRVLARSFHSIMRVGVEVIEQALGTGSVKIPECSPEMTWTRMEVSVMLEHVQAHVAPTDVDPGAGLQWLPKIRRNSPKVKRTGALLERVFMPCDMYFRYTRHKGGTPDLKVKPLKELTFNSHNIIATMTSRQFQVMLDVLTNLLFARLPKPRKSSLQCPTEDEDVEEEADEVVPYGVEEVELAKINLEEKERERKLLLDDIRKLSPCSDNMDDTHIEREGELWMISTRRSILVQGLKKELTYAQKSRKAASASLRMALQKAAQLRIMEKEKNKSPSYAMCISLQINKVVWSMLVDGKSFAEAEINDMIYDFDRDYKDIGVARFTTKYFVVRNCLPNAKSDMLLSAWNPPPEWGKKVMLRVDAKQGAPKDAHYPLELFHVEIYPLRIHLTETMYRMMWEYFFPEEEQDSQSRQEVWKISTTAGSKRVKKGLVGHESSGHAIKDVEASRMSSSALSASAAVQSQSNDDSVQKSNVICLRSSTGASAQELRRTSSFDREENVAEPIANELVLQAHSCNVSSSIEQQEDFSKQKVKEIKPVKSGRSSHEEKKAGKSHEEKKSRPRKMMEFHNIKISQVELLVTYEGSRFVVNDLKLLMDTFHRVEFTGTWRRLFSRVKKHIIWGVLKSVTGMQGKKFKDKSHNNRESTDNDLNLSDNDQTGKPDQQQVTWFKRQSDGAGDGFVTSIRGLFNTQRRKAKAFVLRTMRGEAENDFHGDWSDSDVEFSPFARQLTITKAKRLIRRHTKKFRPRSQRGSTSQQRESLPSSPIETTPFESGYSSGSSPYEDFRE.

The N-terminal stretch at 1 to 35 is a signal peptide; sequence MAASPAKFFFGFLIVSIVLWMIFMLFAWMLSRVLG. Asn196 carries an N-linked (GlcNAc...) asparagine glycan. Positions 259-287 are disordered; sequence FPKSKQSSASLRSDEVRTSATAASSAKKP. Asn331, Asn486, Asn597, Asn807, Asn867, Asn887, Asn1154, Asn1249, Asn1280, and Asn1408 each carry an N-linked (GlcNAc...) asparagine glycan. The tract at residues 786-814 is disordered; that stretch reads PESGCNKGISSVKDGGPSEKINQSNSVNK. Residues 1416 to 1436 are disordered; the sequence is FHQSPSSTEHPTDVGTVYSSQ. N-linked (GlcNAc...) asparagine glycosylation is found at Asn1492 and Asn1659. Disordered regions lie at residues 1656–1676 and 1717–1777; these read EFENGSESDEHIRSDPSDDDG and EPPK…DDIG. A compositionally biased stretch (basic and acidic residues) spans 1731–1748; sequence KIHEENQKESCPETHQGE. The segment covering 1749–1766 has biased composition (polar residues); the sequence is MSRSSASPGRNLPSSPSH. A coiled-coil region spans residues 1995–2023; it reads VEEVELAKINLEEKERERKLLLDDIRKLS. Asn2333 is a glycosylation site (N-linked (GlcNAc...) asparagine). Disordered regions lie at residues 2339–2380, 2448–2479, and 2554–2603; these read EQQE…RPRK, GKKFKDKSHNNRESTDNDLNLSDNDQTGKPDQ, and IRRH…DFRE. Positions 2343-2380 are enriched in basic and acidic residues; sequence DFSKQKVKEIKPVKSGRSSHEEKKAGKSHEEKKSRPRK. A glycan (N-linked (GlcNAc...) asparagine) is linked at Asn2467. Residues 2554–2565 show a composition bias toward basic residues; that stretch reads IRRHTKKFRPRS. Residues 2566-2583 are compositionally biased toward polar residues; the sequence is QRGSTSQQRESLPSSPIE. Low complexity predominate over residues 2586–2603; it reads PFESGYSSGSSPYEDFRE.

The protein belongs to the SABRE family. As to expression, highest levels in leaves, also expressed in leaves, flowers, and siliques, and, to a lower extent, in roots and stems.

The protein resides in the secreted. Its subcellular location is the golgi apparatus. Its function is as follows. May be involved in membrane trafficking. Required for cell expansion, especially in root cortex, probably by counteracting the action of ethylene in promoting cells radial expansion. Involved in female organ development. Antagonistically interacts with ethylene signaling to regulate plant responses to Pi starvation. This is Protein SABRE from Arabidopsis thaliana (Mouse-ear cress).